Consider the following 607-residue polypeptide: DNA primase (607 aa).

Residues Cys-39–Cys-63 form a CHC2-type zinc finger. Residues Asn-267–Asn-350 enclose the Toprim domain. Glu-273, Asp-319, and Asp-321 together coordinate Mg(2+).

This sequence belongs to the DnaG primase family. As to quaternary structure, monomer. Interacts with DnaB. It depends on Zn(2+) as a cofactor. The cofactor is Mg(2+).

The enzyme catalyses ssDNA + n NTP = ssDNA/pppN(pN)n-1 hybrid + (n-1) diphosphate.. RNA polymerase that catalyzes the synthesis of short RNA molecules used as primers for DNA polymerase during DNA replication. The chain is DNA primase from Mycoplasma genitalium (strain ATCC 33530 / DSM 19775 / NCTC 10195 / G37) (Mycoplasmoides genitalium).